A 263-amino-acid chain; its full sequence is Protein PYRICULARIA ORYZAE RESISTANCE 21 (263 aa).

An HMA domain is found at 1–68; sequence MGILVISVDL…IWCKAGKIIK (68 aa). Residues Cys-12 and Cys-15 each coordinate a metal cation. Positions 126-153 are disordered; that stretch reads CEKPKPCEKPPPCKPEEPPKPPPEKPPP. Residues 139–153 are compositionally biased toward basic and acidic residues; it reads KPEEPPKPPPEKPPP.

In terms of biological role, involved in defense responses. Contributes to slowing defense responses toward Magnaporthe oryzae. This is Protein PYRICULARIA ORYZAE RESISTANCE 21 from Oryza sativa subsp. indica (Rice).